Reading from the N-terminus, the 199-residue chain is DnaJ homolog subfamily C member 5B (199 aa).

Phosphoserine is present on residues Ser14 and Ser16. The 66-residue stretch at 19-84 (ALYEILGLQK…SKRNIYDKYG (66 aa)) folds into the J domain.

In terms of assembly, interacts with the chaperone complex consisting of HSC70 and SGTA. Post-translationally, palmitoylated.

The protein resides in the membrane. The chain is DnaJ homolog subfamily C member 5B (DNAJC5B) from Ailuropoda melanoleuca (Giant panda).